We begin with the raw amino-acid sequence, 2353 residues long: C2 domain-containing protein 3 (2353 aa).

The segment at 1 to 27 is disordered; it reads MKQRKGQGSGGSRGRKKRGLSDISPST. Serine 466 is modified (phosphoserine). Disordered stretches follow at residues 488–508 and 549–568; these read KVLE…RNRN and GVPP…AGPP. Over residues 496–507 the composition is skewed to basic residues; that stretch reads KLKKRSAGKRNR. A C2 1 domain is found at 521–678; sequence DAQTMTLSVD…IQSELLSFSD (158 aa). The residue at position 728 (serine 728) is a Phosphoserine. C2 domains follow at residues 787-919, 985-1147, 1171-1339, and 1403-1533; these read SHNL…SRLL, QPTA…HRED, SSGL…TGWY, and EPAT…TLTV. The interval 1569 to 1591 is disordered; that stretch reads HELDSMDCSSHSESEQLPRRNDE. Residues 1617–1745 enclose the C2 6 domain; sequence TTAEVRLTQE…SGFQFVCGWY (129 aa). Residues 1822–1846 form a disordered region; the sequence is SKELDFSSPGRSDTTRSQASRHEEH. The segment covering 1830-1839 has biased composition (polar residues); the sequence is PGRSDTTRSQ. The residue at position 1891 (serine 1891) is a Phosphoserine. 4 disordered regions span residues 1972–2032, 2084–2118, 2130–2269, and 2301–2334; these read ALSS…NGGR, TSPW…PGPF, LSSP…QSLL, and PAAT…LNLP. A compositionally biased stretch (basic and acidic residues) spans 2007 to 2016; that stretch reads PLVRAPDKGT. Residues 2084–2098 show a composition bias toward polar residues; sequence TSPWSSVISDTSEVI. Residues serine 2114 and serine 2132 each carry the phosphoserine modification. A compositionally biased stretch (polar residues) spans 2181–2198; that stretch reads SGAQQSSTFVGWSSPQTD. Residues 2236–2253 are compositionally biased toward basic and acidic residues; sequence SRRENHKGPPIDSSDIRQ. Over residues 2254-2267 the composition is skewed to polar residues; the sequence is RQVTTGSETSTKQS.

In terms of assembly, interacts with IFT88, BBS4 and PCM1. Interacts with OFD1; OFD1 may act as a negative regulator of C2CD3. Associates with the BBSome complex.

It localises to the cytoplasm. The protein localises to the cytoskeleton. The protein resides in the cilium basal body. It is found in the microtubule organizing center. Its subcellular location is the centrosome. It localises to the centriole. Its function is as follows. Component of the centrioles that acts as a positive regulator of centriole elongation. Promotes assembly of centriolar distal appendage, a structure at the distal end of the mother centriole that acts as an anchor of the cilium, and is required for recruitment of centriolar distal appendages proteins CEP83, SCLT1, CEP89, FBF1 and CEP164. Not required for centriolar satellite integrity or RAB8 activation. Required for primary cilium formation. Required for sonic hedgehog/SHH signaling and for proteolytic processing of GLI3. The chain is C2 domain-containing protein 3 (C2CD3) from Homo sapiens (Human).